The sequence spans 282 residues: tRNA pseudouridine synthase B (282 aa).

Asp-39 (nucleophile) is an active-site residue.

It belongs to the pseudouridine synthase TruB family. Type 1 subfamily.

It catalyses the reaction uridine(55) in tRNA = pseudouridine(55) in tRNA. In terms of biological role, responsible for synthesis of pseudouridine from uracil-55 in the psi GC loop of transfer RNAs. The chain is tRNA pseudouridine synthase B from Borreliella afzelii (strain PKo) (Borrelia afzelii).